A 269-amino-acid chain; its full sequence is Myelin protein zero-like protein 1 (269 aa).

Residues 1–35 (MAAPAGAGALIASPDRRRCLWSVLAAALGLLTYGV) form the signal peptide. The Ig-like V-type domain occupies 36 to 146 (SALEVYTPKE…VKNPPDIVVQ (111 aa)). Residues 36–162 (SALEVYTPKE…YVVEKEILPA (127 aa)) lie on the Extracellular side of the membrane. Asn50, Asn64, and Asn130 each carry an N-linked (GlcNAc...) asparagine glycan. Cys58 and Cys135 form a disulfide bridge. A helical transmembrane segment spans residues 163 to 183 (FPVWVVVGIVTAVVLGLTLLI). The Cytoplasmic portion of the chain corresponds to 184 to 269 (TMILAVIYRR…SVVYADIRKN (86 aa)). The segment at 202-238 (GCNTSENVSPVKQVSRKSPSDTEGLVKSLPSGSHQGP) is disordered. Polar residues predominate over residues 203–213 (CNTSENVSPVK). A phosphoserine mark is found at Ser206, Ser210, Ser219, and Ser221. An ITIM motif 1 motif is present at residues 239 to 244 (VIYAQL). The residue at position 241 (Tyr241) is a Phosphotyrosine. The residue at position 260 (Ser260) is a Phosphoserine. The short motif at 261–266 (VVYADI) is the ITIM motif 2 element. Phosphotyrosine is present on Tyr263.

It belongs to the myelin P0 protein family. As to quaternary structure, interacts with phosphorylated PTPN11/SHP-2. Post-translationally, phosphorylated on tyrosine residues upon stimulation with pervanadate and concanavalin-A (ConA). Phosphorylation at Tyr-241 and Tyr-263 is required for interaction with PTPN11/SHP-2. Dephosphorylated by PTPN11/SHP-2 (in vitro). N-glycosylated.

The protein resides in the membrane. Cell surface receptor, which is involved in signal transduction processes. Recruits PTPN11/SHP-2 to the cell membrane and is a putative substrate of PTPN11/SHP-2. Is a major receptor for concanavalin-A (ConA) and is involved in cellular signaling induced by ConA, which probably includes Src family tyrosine-protein kinases. May be involved in regulation of integrin-mediated cell motility. This Bos taurus (Bovine) protein is Myelin protein zero-like protein 1 (MPZL1).